Here is a 168-residue protein sequence, read N- to C-terminus: MISHLSCITNSLPPTELLPWLNIEGSLTALLEVKAGRPLLVERRFEGYRLLSLAQKKQLGIKGAALSHPRLAWVREVYLYGNDELPWVQAQSLFPLSSLKGSARRLQQLKSTPIGYVLFNRSRTLPNQRSIKHTADGWQRQTLYDWHGRSLLISETFLPRFCEKQLDI.

Substrate-binding residues include Arg-75, Ile-114, and Glu-155.

It belongs to the UbiC family.

The protein localises to the cytoplasm. The catalysed reaction is chorismate = 4-hydroxybenzoate + pyruvate. The protein operates within cofactor biosynthesis; ubiquinone biosynthesis. Functionally, removes the pyruvyl group from chorismate, with concomitant aromatization of the ring, to provide 4-hydroxybenzoate (4HB) for the ubiquinone pathway. The protein is Probable chorismate pyruvate-lyase of Psychrobacter cryohalolentis (strain ATCC BAA-1226 / DSM 17306 / VKM B-2378 / K5).